The following is a 127-amino-acid chain: NHP2-like protein 1 homolog (127 aa).

Belongs to the eukaryotic ribosomal protein eL8 family.

The protein localises to the nucleus. It localises to the nucleolus. Binds to the 5'-stem-loop of U4 snRNA and may play a role in the late stage of spliceosome assembly. The protein undergoes a conformational change upon RNA-binding. In Drosophila melanogaster (Fruit fly), this protein is NHP2-like protein 1 homolog (hoip).